A 205-amino-acid chain; its full sequence is tRNA (guanine-N(7)-)-methyltransferase (205 aa).

Glutamate 34, glutamate 59, aspartate 86, and aspartate 107 together coordinate S-adenosyl-L-methionine. Aspartate 107 is an active-site residue. Lysine 111 serves as a coordination point for substrate. The interval 113 to 118 (RHEKRR) is interaction with RNA. Substrate is bound by residues aspartate 144 and 182–185 (TGYE).

It belongs to the class I-like SAM-binding methyltransferase superfamily. TrmB family.

It carries out the reaction guanosine(46) in tRNA + S-adenosyl-L-methionine = N(7)-methylguanosine(46) in tRNA + S-adenosyl-L-homocysteine. Its pathway is tRNA modification; N(7)-methylguanine-tRNA biosynthesis. Functionally, catalyzes the formation of N(7)-methylguanine at position 46 (m7G46) in tRNA. The protein is tRNA (guanine-N(7)-)-methyltransferase of Mycoplasmopsis synoviae (strain 53) (Mycoplasma synoviae).